We begin with the raw amino-acid sequence, 327 residues long: GMP reductase (327 aa).

Residue cysteine 176 is the Thioimidate intermediate of the active site. Residue 205–228 coordinates NADP(+); that stretch reads IIADGGIRTHGDIAKSIRFGASMV.

It belongs to the IMPDH/GMPR family. GuaC type 2 subfamily.

The enzyme catalyses IMP + NH4(+) + NADP(+) = GMP + NADPH + 2 H(+). In terms of biological role, catalyzes the irreversible NADPH-dependent deamination of GMP to IMP. It functions in the conversion of nucleobase, nucleoside and nucleotide derivatives of G to A nucleotides, and in maintaining the intracellular balance of A and G nucleotides. In Streptococcus pyogenes serotype M3 (strain ATCC BAA-595 / MGAS315), this protein is GMP reductase.